The primary structure comprises 364 residues: Aminomethyltransferase (364 aa).

Belongs to the GcvT family. The glycine cleavage system is composed of four proteins: P, T, L and H.

The enzyme catalyses N(6)-[(R)-S(8)-aminomethyldihydrolipoyl]-L-lysyl-[protein] + (6S)-5,6,7,8-tetrahydrofolate = N(6)-[(R)-dihydrolipoyl]-L-lysyl-[protein] + (6R)-5,10-methylene-5,6,7,8-tetrahydrofolate + NH4(+). Its function is as follows. The glycine cleavage system catalyzes the degradation of glycine. This chain is Aminomethyltransferase, found in Shewanella sp. (strain MR-4).